Consider the following 416-residue polypeptide: S-adenosylmethionine synthase (416 aa).

Histidine 14 provides a ligand contact to ATP. Aspartate 16 provides a ligand contact to Mg(2+). Glutamate 42 is a binding site for K(+). L-methionine is bound by residues glutamate 55 and glutamine 98. A flexible loop region spans residues 98–108 (QSPDIARGVDT). Residues 173–175 (DGK), 249–250 (KF), aspartate 258, 264–265 (RK), alanine 281, and lysine 285 contribute to the ATP site. Aspartate 258 provides a ligand contact to L-methionine. Position 289 (lysine 289) interacts with L-methionine.

This sequence belongs to the AdoMet synthase family. Homotetramer; dimer of dimers. Mg(2+) is required as a cofactor. It depends on K(+) as a cofactor.

It is found in the cytoplasm. The catalysed reaction is L-methionine + ATP + H2O = S-adenosyl-L-methionine + phosphate + diphosphate. It functions in the pathway amino-acid biosynthesis; S-adenosyl-L-methionine biosynthesis; S-adenosyl-L-methionine from L-methionine: step 1/1. In terms of biological role, catalyzes the formation of S-adenosylmethionine (AdoMet) from methionine and ATP. The overall synthetic reaction is composed of two sequential steps, AdoMet formation and the subsequent tripolyphosphate hydrolysis which occurs prior to release of AdoMet from the enzyme. The sequence is that of S-adenosylmethionine synthase from Thermosynechococcus vestitus (strain NIES-2133 / IAM M-273 / BP-1).